The sequence spans 1070 residues: DNA-directed RNA polymerase subunit beta (1070 aa).

This sequence belongs to the RNA polymerase beta chain family. As to quaternary structure, in plastids the minimal PEP RNA polymerase catalytic core is composed of four subunits: alpha, beta, beta', and beta''. When a (nuclear-encoded) sigma factor is associated with the core the holoenzyme is formed, which can initiate transcription.

Its subcellular location is the plastid. It localises to the chloroplast. The enzyme catalyses RNA(n) + a ribonucleoside 5'-triphosphate = RNA(n+1) + diphosphate. In terms of biological role, DNA-dependent RNA polymerase catalyzes the transcription of DNA into RNA using the four ribonucleoside triphosphates as substrates. The chain is DNA-directed RNA polymerase subunit beta from Citrus sinensis (Sweet orange).